The primary structure comprises 750 residues: Iron-sulfur clusters transporter ATM1, mitochondrial (750 aa).

The N-terminal 16 residues, 1–16 (MFIRNVKLIKPSPVRF), are a transit peptide targeting the mitochondrion. The Mitochondrial matrix portion of the chain corresponds to 17-124 (ISPIPFSFPI…PKNNLNFKIR (108 aa)). 2 stretches are compositionally biased toward low complexity: residues 43 to 75 (TSNF…KTLS) and 87 to 100 (DNDT…SSEN). The disordered stretch occupies residues 43-100 (TSNFKSTSSSSSLKSTSTSTSTSTSKTTPKTLSKPPPKVKPPIQDNDTTSSGSSSSEN). The helical transmembrane segment at 125–146 (VIIALSLLVGAKILNVQVPFYF) threads the bilayer. Residues 125 to 415 (VIIALSLLVG…LGSVYRELKQ (291 aa)) enclose the ABC transmembrane type-1 domain. The Mitochondrial intermembrane portion of the chain corresponds to 147-169 (KQIIDTMNIDWTNEVGVFSTVIG). Residues 170 to 193 (SLILAYGGARFGAVLFGELRNAIF) form a helical membrane-spanning segment. Topologically, residues 194-242 (ASVAQSAIRRVAYNTFVKLLNMDLQFHLSRQTGGLTRAIDRGTKGISYV) are mitochondrial matrix. A helical membrane pass occupies residues 243 to 266 (LSAMVFHIIPITLEISIVCGILTY). A topological domain (mitochondrial intermembrane) is located at residue asparagine 267. The helical transmembrane segment at 268 to 288 (YGASFAAMTFVTMLAYSIFTI) threads the bilayer. Residues 289–354 (QTTAWRTKFR…SSVKIATSLA (66 aa)) are Mitochondrial matrix-facing. Glutathione contacts are provided by residues 294-298 (RTKFR) and 357-360 (NSGQ). A helical transmembrane segment spans residues 355-373 (FLNSGQNFIFTSALTAMMY). Residues 374 to 388 (MGCQGVYTGELTVGD) are Mitochondrial intermembrane-facing. A helical membrane pass occupies residues 389-410 (LVLINQLVFQLSVPLNFLGSVY). Glycine 407 contacts glutathione. Residues 411–750 (RELKQSLLDM…LFNSQTFEKK (340 aa)) are Mitochondrial matrix-facing. The segment at 437 to 462 (PNAPPLKLNNNNNNNNNNNNNNNNSL) is disordered. The segment covering 445–460 (NNNNNNNNNNNNNNNN) has biased composition (low complexity). The 237-residue stretch at 466-702 (IRFENVSFGY…QPNSLYAQLW (237 aa)) folds into the ABC transporter domain. ATP is bound by residues tyrosine 475 and 499 to 510 (GPSGSGKSTILR).

This sequence belongs to the ABC transporter superfamily. ABCB family. Heavy Metal importer (TC 3.A.1.210) subfamily. Homodimer.

Its subcellular location is the mitochondrion inner membrane. Its function is as follows. Performs an essential function in the generation of cytoplasmic iron-sulfur proteins by mediating the ATP-dependent export of Fe/S cluster precursors synthesized by NFS1 and other mitochondrial proteins. Hydrolyzes ATP. Binds glutathione and may function by transporting a glutathione-conjugated iron-sulfur compound. This is Iron-sulfur clusters transporter ATM1, mitochondrial from Candida albicans (strain SC5314 / ATCC MYA-2876) (Yeast).